We begin with the raw amino-acid sequence, 706 residues long: Histone deacetylase HDA1 (706 aa).

Basic and acidic residues predominate over residues 1–24 (MDSVMVKKEVLENPDHDLKRKLEE). The interval 1 to 36 (MDSVMVKKEVLENPDHDLKRKLEENKEEENSLSTTS) is disordered. The interval 67–396 (RYHAKIFTSY…ALSVAKVLIG (330 aa)) is histone deacetylase. The active site involves His-206.

Belongs to the histone deacetylase family. HD type 2 subfamily.

It localises to the nucleus. The catalysed reaction is N(6)-acetyl-L-lysyl-[histone] + H2O = L-lysyl-[histone] + acetate. Functionally, responsible for the deacetylation of lysine residues on the N-terminal part of the core histones (H2A, H2B, H3 and H4). Histone deacetylation gives a tag for epigenetic repression and plays an important role in transcriptional regulation, cell cycle progression and developmental events. Histone deacetylases act via the formation of large multiprotein complexes. The sequence is that of Histone deacetylase HDA1 (HDA1) from Saccharomyces cerevisiae (strain ATCC 204508 / S288c) (Baker's yeast).